The sequence spans 185 residues: Ribosome-recycling factor (185 aa).

The protein belongs to the RRF family.

It localises to the cytoplasm. In terms of biological role, responsible for the release of ribosomes from messenger RNA at the termination of protein biosynthesis. May increase the efficiency of translation by recycling ribosomes from one round of translation to another. This chain is Ribosome-recycling factor, found in Desulfosudis oleivorans (strain DSM 6200 / JCM 39069 / Hxd3) (Desulfococcus oleovorans).